We begin with the raw amino-acid sequence, 198 residues long: C4b-binding protein beta chain (198 aa).

A signal peptide spans 1–17; that stretch reads MFFWLMCYLVDVWLISA. Positions 22 to 77 constitute a Sushi 1; atypical; lacks a Cys domain; sequence HCPDPLLVTDEFSSLEPVNVNDTFMFKCNEHCIFKGSNWSQCRENHTRVTHSPVSK. N-linked (GlcNAc...) asparagine glycans are attached at residues Asn-42, Asn-59, and Asn-66. Residues 79–135 enclose the Sushi 2 domain; the sequence is RDCGPPETPTHGYFEGRDFKSGSTITYYCEARYRLVGTQHQQCIDGEWTSAPPICEL. Cystine bridges form between Cys-81-Cys-121 and Cys-107-Cys-133.

In terms of assembly, disulfide-linked complex of alpha and beta chains.

The protein resides in the secreted. Controls the classical pathway of complement activation. It binds as a cofactor to C3b/C4b inactivator (C3bINA), which then hydrolyzes the complement fragment C4b. It also accelerates the degradation of the C4bC2a complex (C3 convertase) by dissociating the complement fragment C2a. It also interacts with serum amyloid P component. In Bos taurus (Bovine), this protein is C4b-binding protein beta chain (C4BPB).